The sequence spans 214 residues: 3,4-dihydroxy-2-butanone 4-phosphate synthase (214 aa).

D-ribulose 5-phosphate contacts are provided by residues 37–38 (RE), aspartate 42, 150–154 (RRGHT), and glutamate 174. Residue glutamate 38 coordinates Mg(2+). Histidine 153 provides a ligand contact to Mg(2+).

The protein belongs to the DHBP synthase family. As to quaternary structure, homodimer. The cofactor is Mg(2+). Mn(2+) serves as cofactor.

The enzyme catalyses D-ribulose 5-phosphate = (2S)-2-hydroxy-3-oxobutyl phosphate + formate + H(+). It functions in the pathway cofactor biosynthesis; riboflavin biosynthesis; 2-hydroxy-3-oxobutyl phosphate from D-ribulose 5-phosphate: step 1/1. Its function is as follows. Catalyzes the conversion of D-ribulose 5-phosphate to formate and 3,4-dihydroxy-2-butanone 4-phosphate. The chain is 3,4-dihydroxy-2-butanone 4-phosphate synthase from Histophilus somni (strain 2336) (Haemophilus somnus).